Reading from the N-terminus, the 376-residue chain is Glucose-1-phosphate adenylyltransferase (376 aa).

Alpha-D-glucose 1-phosphate is bound by residues Tyr101, Gly166, 181-182 (EK), and Ser192.

This sequence belongs to the bacterial/plant glucose-1-phosphate adenylyltransferase family. In terms of assembly, homotetramer.

The catalysed reaction is alpha-D-glucose 1-phosphate + ATP + H(+) = ADP-alpha-D-glucose + diphosphate. It functions in the pathway glycan biosynthesis; glycogen biosynthesis. In terms of biological role, involved in the biosynthesis of ADP-glucose, a building block required for the elongation reactions to produce glycogen. Catalyzes the reaction between ATP and alpha-D-glucose 1-phosphate (G1P) to produce pyrophosphate and ADP-Glc. The chain is Glucose-1-phosphate adenylyltransferase from Bacillus thuringiensis (strain Al Hakam).